Reading from the N-terminus, the 4662-residue chain is Protein PF3D7_1417600 (4662 aa).

2 consecutive transmembrane segments (helical) span residues 136-156 (INYV…YLYI) and 161-181 (YIYY…FHII). One copy of the LRR 1 repeat lies at 466–489 (IKNIDSINKNHKRLIKISNYNITN). The tract at residues 583-710 (YRNDGDVNNK…KMKPDNTLNE (128 aa)) is disordered. Residues 590 to 644 (NNKNGYNNNEHSNSSNERSNNNGDNNNNNHNNNNHNNNHHNNGSNNHNGNNNSNN) are compositionally biased toward low complexity. The span at 650 to 666 (DDDKKGNDKKNEDKDDE) shows a compositional bias: basic and acidic residues. The segment covering 690–701 (KKRKEKSKNKNK) has biased composition (basic residues). The region spanning 783 to 856 (YKPTEPVNIF…ISNDIKMFWF (74 aa)) is the HSA domain. Residues 942 to 967 (GLMNKMSHQNGKNNNHNDYNNKCEDN) are disordered. One copy of the LRR 2 repeat lies at 1150–1172 (NVHINHIQYDDNNLYYNDDLYNY). The span at 1505-1524 (NNNNNSNNNNSNSNNNSNSN) shows a compositional bias: low complexity. 2 disordered regions span residues 1505–1540 (NNNN…NNSS) and 1705–1761 (KINS…NEKD). Over residues 1710 to 1761 (NNDKSDDKNDDKNDKKNDGKNDKNDEKDDNKTGEKGDNKIGEKDDNKINEKD) the composition is skewed to basic and acidic residues. LRR repeat units lie at residues 2063-2086 (ITKV…MFNK) and 2129-2153 (DEEI…NVKD). A disordered region spans residues 2228–2261 (KNKSNKKKRAKKNIKLGEEENESECNNEGECNNE). Over residues 2230–2241 (KSNKKKRAKKNI) the composition is skewed to basic residues. Residues 2246 to 2261 (EENESECNNEGECNNE) are compositionally biased toward acidic residues. LRR repeat units lie at residues 2672–2695 (LDKL…KTID), 2773–2796 (NTVL…TVDI), 2864–2888 (INDD…VNNN), and 2904–2929 (ANNI…YNNS). The interval 2956-2975 (MNNTKQRSHSSYHTSFPMQN) is disordered. LRR repeat units follow at residues 3377–3400 (QNNM…NITM), 3438–3461 (NNSM…YNNS), 3756–3781 (SQRL…NINN), 3935–3960 (QPNI…NINN), 3965–3985 (QPNI…SMNQ), and 3986–4010 (PNIN…NINN). The stretch at 4203 to 4272 (DMNQQERLQQ…ERLQQKWEQQ (70 aa)) forms a coiled coil. 2 LRR repeats span residues 4296-4321 (YQEL…IFLK) and 4333-4357 (QKMH…SLQQ). The tract at residues 4384–4412 (QMNHQQINKHQMNQQQMNKQQMNQQQINQ) is disordered.

It is found in the membrane. This is Protein PF3D7_1417600 from Plasmodium falciparum (isolate 3D7).